A 214-amino-acid polypeptide reads, in one-letter code: Adenylate kinase (214 aa).

10–15 (GAGKGT) contributes to the ATP binding site. The interval 30–59 (CTGDMLRAAVKAGSELGLKAKEIMDAGKLV) is NMP. AMP contacts are provided by residues Thr-31, Arg-36, 57–59 (KLV), 85–88 (GFPR), and Gln-92. Residues 122-159 (GRRVHAASGRVYHIKFNPPKVEDKDDVTGEELTIRKDD) are LID. Residues Arg-123 and 132–133 (VY) contribute to the ATP site. Residues Arg-156 and Arg-167 each contribute to the AMP site. Arg-200 contacts ATP.

This sequence belongs to the adenylate kinase family. In terms of assembly, monomer.

The protein resides in the cytoplasm. The catalysed reaction is AMP + ATP = 2 ADP. Its pathway is purine metabolism; AMP biosynthesis via salvage pathway; AMP from ADP: step 1/1. Its function is as follows. Catalyzes the reversible transfer of the terminal phosphate group between ATP and AMP. Plays an important role in cellular energy homeostasis and in adenine nucleotide metabolism. The sequence is that of Adenylate kinase from Yersinia enterocolitica.